Here is a 231-residue protein sequence, read N- to C-terminus: Lactate utilization protein C (231 aa).

Belongs to the LutC/YkgG family.

Its function is as follows. Is involved in L-lactate degradation and allows cells to grow with lactate as the sole carbon source. This Macrococcus caseolyticus (strain JCSC5402) (Macrococcoides caseolyticum) protein is Lactate utilization protein C.